A 122-amino-acid chain; its full sequence is Small ribosomal subunit protein uS13 (122 aa).

Positions 95–122 are disordered; that stretch reads GLPVRGQRTHTNARTRKGPAKPIAGKKK.

The protein belongs to the universal ribosomal protein uS13 family. Part of the 30S ribosomal subunit. Forms a loose heterodimer with protein S19. Forms two bridges to the 50S subunit in the 70S ribosome.

In terms of biological role, located at the top of the head of the 30S subunit, it contacts several helices of the 16S rRNA. In the 70S ribosome it contacts the 23S rRNA (bridge B1a) and protein L5 of the 50S subunit (bridge B1b), connecting the 2 subunits; these bridges are implicated in subunit movement. Contacts the tRNAs in the A and P-sites. This chain is Small ribosomal subunit protein uS13, found in Rhodospirillum rubrum (strain ATCC 11170 / ATH 1.1.1 / DSM 467 / LMG 4362 / NCIMB 8255 / S1).